Here is a 585-residue protein sequence, read N- to C-terminus: S-antigen protein (585 aa).

The N-terminal stretch at M1 to G23 is a signal peptide. The disordered stretch occupies residues N51–M585. Positions D59–N85 are enriched in acidic residues. The span at Q96 to V113 shows a compositional bias: basic and acidic residues. 56 consecutive repeat copies span residues E102–R109, E110–G117, E118–G125, E126–R133, E134–G141, E142–R149, E150–G157, E158–R165, E166–G173, E174–R181, E182–G189, E190–R197, E198–R205, E206–G213, E214–R221, E222–R229, E230–G237, E238–R245, E246–G253, E254–R261, E262–G269, E270–R277, E278–R285, E286–R293, E294–G301, E302–R309, E310–G317, E318–R325, E326–R333, E334–G341, E342–R349, E350–G357, E358–R365, E366–R373, E374–R381, E382–R389, E390–G397, E398–R405, E406–R413, E414–G421, E422–R429, E430–G437, E438–R445, E446–R453, E454–R461, E462–G469, E470–G477, E478–R485, E486–G493, E494–R501, E502–G509, E510–R517, E518–G525, E526–R533, E534–R541, and E542–R549. Residues E102–R549 are 56 X 8 AA tandem repeats of E-D-[EK]-V-S-N-G-[RG]. Positions G117–V129 are enriched in acidic residues. Composition is skewed to basic and acidic residues over residues S194–V209 and S218–V233. Residues S274–V297 show a composition bias toward basic and acidic residues. The span at S322–V337 shows a compositional bias: basic and acidic residues. Basic and acidic residues-rich tracts occupy residues S362–V393 and S402–V417. The segment covering S442–V465 has biased composition (basic and acidic residues). The span at G469–V481 shows a compositional bias: acidic residues. Basic and acidic residues-rich tracts occupy residues S530–G553 and E560–T569. A compositionally biased stretch (low complexity) spans N576–M585.

Its subcellular location is the parasitophorous vacuole. Its function is as follows. S antigens are soluble heat-stable proteins present in the sera of some infected individuals. This is S-antigen protein from Plasmodium falciparum (isolate 3D7).